A 250-amino-acid chain; its full sequence is Phosphoribosylaminoimidazole-succinocarboxamide synthase (250 aa).

It belongs to the SAICAR synthetase family.

The catalysed reaction is 5-amino-1-(5-phospho-D-ribosyl)imidazole-4-carboxylate + L-aspartate + ATP = (2S)-2-[5-amino-1-(5-phospho-beta-D-ribosyl)imidazole-4-carboxamido]succinate + ADP + phosphate + 2 H(+). It participates in purine metabolism; IMP biosynthesis via de novo pathway; 5-amino-1-(5-phospho-D-ribosyl)imidazole-4-carboxamide from 5-amino-1-(5-phospho-D-ribosyl)imidazole-4-carboxylate: step 1/2. This is Phosphoribosylaminoimidazole-succinocarboxamide synthase from Bifidobacterium longum (strain DJO10A).